Consider the following 537-residue polypeptide: CTP synthase (537 aa).

The segment at 1–267 (MTKYIFVTGG…DQIVCDHLKL (267 aa)) is amidoligase domain. Residue Ser-13 coordinates CTP. Ser-13 provides a ligand contact to UTP. 14–19 (SIGKGI) lines the ATP pocket. Position 54 (Tyr-54) interacts with L-glutamine. Residue Asp-71 coordinates ATP. The Mg(2+) site is built by Asp-71 and Glu-141. CTP is bound by residues 148-150 (DIE), 188-193 (KTKPTQ), and Lys-224. Residues 188 to 193 (KTKPTQ) and Lys-224 each bind UTP. ATP is bound at residue 240–242 (RDV). The region spanning 292–535 (RIALVGKYVE…VTAAVKNKNQ (244 aa)) is the Glutamine amidotransferase type-1 domain. An L-glutamine-binding site is contributed by Gly-354. Residue Cys-381 is the Nucleophile; for glutamine hydrolysis of the active site. L-glutamine contacts are provided by residues 382-385 (LGMQ), Glu-405, and Arg-463. Residues His-508 and Glu-510 contribute to the active site.

Belongs to the CTP synthase family. In terms of assembly, homotetramer.

It catalyses the reaction UTP + L-glutamine + ATP + H2O = CTP + L-glutamate + ADP + phosphate + 2 H(+). The enzyme catalyses L-glutamine + H2O = L-glutamate + NH4(+). It carries out the reaction UTP + NH4(+) + ATP = CTP + ADP + phosphate + 2 H(+). The protein operates within pyrimidine metabolism; CTP biosynthesis via de novo pathway; CTP from UDP: step 2/2. Allosterically activated by GTP, when glutamine is the substrate; GTP has no effect on the reaction when ammonia is the substrate. The allosteric effector GTP functions by stabilizing the protein conformation that binds the tetrahedral intermediate(s) formed during glutamine hydrolysis. Inhibited by the product CTP, via allosteric rather than competitive inhibition. In terms of biological role, catalyzes the ATP-dependent amination of UTP to CTP with either L-glutamine or ammonia as the source of nitrogen. Regulates intracellular CTP levels through interactions with the four ribonucleotide triphosphates. The chain is CTP synthase from Streptococcus equi subsp. equi (strain 4047).